The sequence spans 318 residues: AT-hook motif nuclear-localized protein 7 (318 aa).

2 disordered regions span residues 1–76 (METS…PSSS) and 241–318 (SDQQ…LPVD). The short motif at 56–64 (KKRRGRPRK) is the Bipartite nuclear localization signal element. Positions 56 to 68 (KKRRGRPRKYEAN) form a DNA-binding region, a.T hook. Positions 120-259 (GSNFTPHVIT…RKQRVEHAPA (140 aa)) constitute a PPC domain. Residues 243–256 (QQDHQKPRKQRVEH) are compositionally biased toward basic and acidic residues. Residues 264-274 (VPPPPSPPPPA) show a composition bias toward pro residues. Residues 288–312 (PPSSFGISSWTNGQDMPRNSATDIN) are compositionally biased toward polar residues.

The protein localises to the nucleus. Its function is as follows. Transcription factor that specifically binds AT-rich DNA sequences related to the nuclear matrix attachment regions (MARs). The protein is AT-hook motif nuclear-localized protein 7 of Arabidopsis thaliana (Mouse-ear cress).